Reading from the N-terminus, the 389-residue chain is Mannitol-1-phosphate 5-dehydrogenase (389 aa).

Residue 5 to 16 (AIQFGGGNIGRG) participates in NAD(+) binding. The active site involves lysine 214.

This sequence belongs to the mannitol dehydrogenase family. In terms of assembly, monomer.

It catalyses the reaction D-mannitol 1-phosphate + NAD(+) = beta-D-fructose 6-phosphate + NADH + H(+). Functionally, catalyzes the NAD(H)-dependent interconversion of D-fructose 6-phosphate and D-mannitol 1-phosphate in the mannitol metabolic pathway. This Talaromyces marneffei (strain ATCC 18224 / CBS 334.59 / QM 7333) (Penicillium marneffei) protein is Mannitol-1-phosphate 5-dehydrogenase.